The sequence spans 641 residues: 1-deoxy-D-xylulose-5-phosphate synthase (641 aa).

Thiamine diphosphate-binding positions include histidine 71 and 112–114 (SHA). Aspartate 144 is a binding site for Mg(2+). Thiamine diphosphate-binding positions include 145-146 (GA), asparagine 173, tyrosine 284, and glutamate 365. Mg(2+) is bound at residue asparagine 173.

This sequence belongs to the transketolase family. DXPS subfamily. In terms of assembly, homodimer. Mg(2+) is required as a cofactor. It depends on thiamine diphosphate as a cofactor.

The enzyme catalyses D-glyceraldehyde 3-phosphate + pyruvate + H(+) = 1-deoxy-D-xylulose 5-phosphate + CO2. It participates in metabolic intermediate biosynthesis; 1-deoxy-D-xylulose 5-phosphate biosynthesis; 1-deoxy-D-xylulose 5-phosphate from D-glyceraldehyde 3-phosphate and pyruvate: step 1/1. Its function is as follows. Catalyzes the acyloin condensation reaction between C atoms 2 and 3 of pyruvate and glyceraldehyde 3-phosphate to yield 1-deoxy-D-xylulose-5-phosphate (DXP). This Mycolicibacterium paratuberculosis (strain ATCC BAA-968 / K-10) (Mycobacterium paratuberculosis) protein is 1-deoxy-D-xylulose-5-phosphate synthase.